A 513-amino-acid polypeptide reads, in one-letter code: GMP synthase [glutamine-hydrolyzing] (513 aa).

The Glutamine amidotransferase type-1 domain maps to 8–198; the sequence is MILVLDFGSQ…VFGVCECVGE (191 aa). The Nucleophile role is filled by cysteine 85. Catalysis depends on residues histidine 172 and glutamate 174. The 190-residue stretch at 199 to 388 folds into the GMPS ATP-PPase domain; the sequence is WSMENFIEIE…LGIPDEIVWR (190 aa). 226–232 contributes to the ATP binding site; that stretch reads SGGVDSS.

As to quaternary structure, homodimer.

The enzyme catalyses XMP + L-glutamine + ATP + H2O = GMP + L-glutamate + AMP + diphosphate + 2 H(+). The protein operates within purine metabolism; GMP biosynthesis; GMP from XMP (L-Gln route): step 1/1. Catalyzes the synthesis of GMP from XMP. This Bacillus licheniformis (strain ATCC 14580 / DSM 13 / JCM 2505 / CCUG 7422 / NBRC 12200 / NCIMB 9375 / NCTC 10341 / NRRL NRS-1264 / Gibson 46) protein is GMP synthase [glutamine-hydrolyzing].